The following is a 1203-amino-acid chain: DNA-directed RNA polymerase subunit beta' (1203 aa).

Positions 60, 62, 75, and 78 each coordinate Zn(2+). 3 residues coordinate Mg(2+): D449, D451, and D453. Positions 818, 892, 899, and 902 each coordinate Zn(2+). The segment at 1180-1203 (RNLESGLDMPESAEESSEEETQTV) is disordered. A compositionally biased stretch (acidic residues) spans 1190–1203 (ESAEESSEEETQTV).

This sequence belongs to the RNA polymerase beta' chain family. As to quaternary structure, the RNAP catalytic core consists of 2 alpha, 1 beta, 1 beta' and 1 omega subunit. When a sigma factor is associated with the core the holoenzyme is formed, which can initiate transcription. Mg(2+) is required as a cofactor. The cofactor is Zn(2+).

It carries out the reaction RNA(n) + a ribonucleoside 5'-triphosphate = RNA(n+1) + diphosphate. DNA-dependent RNA polymerase catalyzes the transcription of DNA into RNA using the four ribonucleoside triphosphates as substrates. The sequence is that of DNA-directed RNA polymerase subunit beta' from Oceanobacillus iheyensis (strain DSM 14371 / CIP 107618 / JCM 11309 / KCTC 3954 / HTE831).